Here is a 39-residue protein sequence, read N- to C-terminus: Potassium channel toxin alpha-KTx 2.23 (39 aa).

Cystine bridges form between Cys-7/Cys-29, Cys-13/Cys-34, and Cys-17/Cys-36.

Expressed by the venom gland.

Its subcellular location is the secreted. In terms of biological role, blocks human voltage-gated potassium (Kv) channels Kv1.1/KCNA1, Kv1.2/KCNA2 and Kv1.3/KCNA3. The polypeptide is Potassium channel toxin alpha-KTx 2.23 (Centruroides bonito (Scorpion)).